We begin with the raw amino-acid sequence, 49 residues long: Large ribosomal subunit protein bL32 (49 aa).

Residues 25–49 (AKPVKDKDGTYKLPHHINPTTGEYK) are disordered.

Belongs to the bacterial ribosomal protein bL32 family.

The protein is Large ribosomal subunit protein bL32 of Sulfurimonas denitrificans (strain ATCC 33889 / DSM 1251) (Thiomicrospira denitrificans (strain ATCC 33889 / DSM 1251)).